A 258-amino-acid chain; its full sequence is Type III pantothenate kinase (258 aa).

7–14 (DVGNTRLK) lines the ATP pocket. Substrate-binding positions include Tyr-96 and 103–106 (GADR). Residue Asp-105 is the Proton acceptor of the active site. An ATP-binding site is contributed by Thr-133. Thr-183 is a binding site for substrate.

It belongs to the type III pantothenate kinase family. In terms of assembly, homodimer. Requires NH4(+) as cofactor. It depends on K(+) as a cofactor.

The protein localises to the cytoplasm. The enzyme catalyses (R)-pantothenate + ATP = (R)-4'-phosphopantothenate + ADP + H(+). The protein operates within cofactor biosynthesis; coenzyme A biosynthesis; CoA from (R)-pantothenate: step 1/5. Catalyzes the phosphorylation of pantothenate (Pan), the first step in CoA biosynthesis. The sequence is that of Type III pantothenate kinase from Acidovorax ebreus (strain TPSY) (Diaphorobacter sp. (strain TPSY)).